Reading from the N-terminus, the 192-residue chain is CASP-like protein 2U1 (192 aa).

Residues 1 to 11 lie on the Cytoplasmic side of the membrane; sequence MASRKQGAREG. Residues 12-32 traverse the membrane as a helical segment; that stretch reads LWSMGVRLLTTLLCITSLILL. The Extracellular portion of the chain corresponds to 33–58; sequence LKAKQTVRRALGLGYIAQTVKYSDTS. Residues 59-79 form a helical membrane-spanning segment; sequence GFIYLVYINILVAAYGLIVFV. Topologically, residues 80-96 are cytoplasmic; the sequence is SLIPSALGKSCSGKCSR. Residues 97 to 117 form a helical membrane-spanning segment; that stretch reads WTIFVLDQVFAYVLLSAVSAA. At 118–145 the chain is on the extracellular side; sequence TEVLYLADKGMSKTQWEALCPTYGFFCH. The chain crosses the membrane as a helical span at residues 146–166; sequence MVSASVAIGSVAVVLLAVLSV. The Cytoplasmic portion of the chain corresponds to 167–192; that stretch reads SSAQSLFHNFYTRALYTTKMRHSSLT.

Belongs to the Casparian strip membrane proteins (CASP) family. Homodimer and heterodimers.

It localises to the cell membrane. This Adiantum capillus-veneris (Maidenhair fern) protein is CASP-like protein 2U1.